The sequence spans 128 residues: MAKTKGEKRNKSAINEVVTRECTIHLAKRVHNIGFKKRAPRAIKEIRKFTEREMGTNDVRIDTRLNKHIWSKGISLRYRSTPFRVRVRLARRRNDDEDSPNKLYTLVTYVPVPTFKNLQTENVESSDD.

This sequence belongs to the eukaryotic ribosomal protein eL31 family.

The chain is Large ribosomal subunit protein eL31 (RpL31) from Drosophila virilis (Fruit fly).